Reading from the N-terminus, the 287-residue chain is Protease HtpX (287 aa).

2 consecutive transmembrane segments (helical) span residues 4-24 (IFLLIATNLAVLLVASIVMSI) and 33-53 (GGLLVFAAIFGFGGAFISLAI). H139 lines the Zn(2+) pocket. The active site involves E140. H143 serves as a coordination point for Zn(2+). 2 helical membrane-spanning segments follow: residues 154-174 (LIQGVVNTFVIFAARVVAGII) and 195-215 (AVVFVLDMLFGILASIIVAYF). Position 220 (E220) interacts with Zn(2+).

The protein belongs to the peptidase M48B family. Zn(2+) is required as a cofactor.

The protein resides in the cell inner membrane. This Shewanella baltica (strain OS223) protein is Protease HtpX.